A 315-amino-acid polypeptide reads, in one-letter code: Aspartate carbamoyltransferase catalytic subunit (315 aa).

Residues Arg-64 and Thr-65 each coordinate carbamoyl phosphate. Lys-92 is a binding site for L-aspartate. Positions 114, 142, and 145 each coordinate carbamoyl phosphate. Residues Arg-175 and Arg-229 each contribute to the L-aspartate site. Residues Gly-270 and Pro-271 each contribute to the carbamoyl phosphate site.

It belongs to the aspartate/ornithine carbamoyltransferase superfamily. ATCase family. As to quaternary structure, heterododecamer (2C3:3R2) of six catalytic PyrB chains organized as two trimers (C3), and six regulatory PyrI chains organized as three dimers (R2).

It carries out the reaction carbamoyl phosphate + L-aspartate = N-carbamoyl-L-aspartate + phosphate + H(+). It participates in pyrimidine metabolism; UMP biosynthesis via de novo pathway; (S)-dihydroorotate from bicarbonate: step 2/3. In terms of biological role, catalyzes the condensation of carbamoyl phosphate and aspartate to form carbamoyl aspartate and inorganic phosphate, the committed step in the de novo pyrimidine nucleotide biosynthesis pathway. The protein is Aspartate carbamoyltransferase catalytic subunit of Bradyrhizobium diazoefficiens (strain JCM 10833 / BCRC 13528 / IAM 13628 / NBRC 14792 / USDA 110).